Here is a 76-residue protein sequence, read N- to C-terminus: Kappa-actitoxin-Avd4a (76 aa).

The signal sequence occupies residues 1–19; that stretch reads MNKALFLCLVVLCAAVVFA. The propeptide occupies 20–31; sequence AEDLQKAKHAPF. 3 cysteine pairs are disulfide-bonded: cysteine 37–cysteine 72, cysteine 39–cysteine 65, and cysteine 55–cysteine 73.

It belongs to the sea anemone type 3 (BDS) potassium channel toxin family. As to expression, highly expressed in the ectodermal tissue from the distal and proximal tentacles, body wall, and oral disk.

It is found in the secreted. It localises to the nematocyst. In terms of biological role, acts as a gating modifier on both Kv and Nav ion channels, and also acts on blood pressure. Voltage-dependently inhibits voltage-gated potassium channels Kv3 (Kv3.1/KCNC1, Kv3.2/KCNC2 and Kv3.4/KCNC4) and slows inactivation of the voltage-gated sodium channel Nav1.7/SCN9A. Inhibits all Kv3.1, Kv3.2 and Kv3.4 by about 50% when tested at a voltage of +40 mV (45%, 48% and 56%, respectively). May act by binding residues in voltage-sensing domains S3b and S4 of Kv3. On sodium channels, tests have been done on human Nav1.7/SCN9A (expressed in HEK293 cells) (EC(50)=3 nM) and rat SCG neurons that mostly carry Nav1.7 channels (EC(50)=300 nM). This toxin also reduces blood pressure. The protein is Kappa-actitoxin-Avd4a of Anemonia viridis (Snakelocks anemone).